The sequence spans 188 residues: Elongation factor P (188 aa).

N6-(3,6-diaminohexanoyl)-5-hydroxylysine is present on Lys-34.

The protein belongs to the elongation factor P family. Post-translationally, may be beta-lysylated on the epsilon-amino group of Lys-34 by the combined action of EpmA and EpmB, and then hydroxylated on the C5 position of the same residue by EpmC (if this protein is present). Lysylation is critical for the stimulatory effect of EF-P on peptide-bond formation. The lysylation moiety may extend toward the peptidyltransferase center and stabilize the terminal 3-CCA end of the tRNA. Hydroxylation of the C5 position on Lys-34 may allow additional potential stabilizing hydrogen-bond interactions with the P-tRNA.

The protein resides in the cytoplasm. It participates in protein biosynthesis; polypeptide chain elongation. Involved in peptide bond synthesis. Alleviates ribosome stalling that occurs when 3 or more consecutive Pro residues or the sequence PPG is present in a protein, possibly by augmenting the peptidyl transferase activity of the ribosome. Modification of Lys-34 is required for alleviation. The polypeptide is Elongation factor P (Serratia proteamaculans (strain 568)).